A 72-amino-acid polypeptide reads, in one-letter code: Conorfamide-Tx2 (72 aa).

An N-terminal signal peptide occupies residues 1 to 19 (MSGRGFLLLALLLLVTVEA). Positions 20–25 (TRVEKK) are excised as a propeptide. The interval 32-39 (AWSGPRNR) is positively charged region crucial for activity against MRGPRX1 receptors. I43 carries the post-translational modification Isoleucine amide. The propeptide occupies 44-72 (GRRDMQSPLLSERLRFRALGFRQPSSQKQ).

The protein belongs to the FARP (FMRFamide related peptide) family. Expressed by the venom duct.

It is found in the secreted. This peptide activates human sensory neuron-specific G-protein coupled receptors MRGPRX1, but not mouse receptors (EC(50)=0.54 uM). Compared with the agonist chloroquine (anti-malaria drug), it is 600-fold more potent. In vivo, induces itch sensation, since intradermal cheek injection into humanized transgenic mouse (mouse MRGPRX1 replaced by human MRGPRX1) induces scratching. In vivo, treatment of zebrafish larvae with high doses (10 uM) induces hypoactivity at the beginning of the experiment during the dark phase and hyperactivity in the strobe phase after one hour, even after the removal of the toxin from the solution. The sequence is that of Conorfamide-Tx2 from Conus textile (Cloth-of-gold cone).